The chain runs to 212 residues: Large ribosomal subunit protein uL3 (212 aa).

Residues 136–155 are compositionally biased toward polar residues; that stretch reads THGNSLSHRSNGSIGQNQTP. The interval 136–157 is disordered; that stretch reads THGNSLSHRSNGSIGQNQTPGR. Gln-153 carries the post-translational modification N5-methylglutamine.

The protein belongs to the universal ribosomal protein uL3 family. As to quaternary structure, part of the 50S ribosomal subunit. Forms a cluster with proteins L14 and L19. Methylated by PrmB.

Functionally, one of the primary rRNA binding proteins, it binds directly near the 3'-end of the 23S rRNA, where it nucleates assembly of the 50S subunit. In Shewanella putrefaciens (strain CN-32 / ATCC BAA-453), this protein is Large ribosomal subunit protein uL3.